We begin with the raw amino-acid sequence, 117 residues long: DNA-directed RNA polymerase II subunit RPB11 (117 aa).

N-acetylmethionine is present on Met1.

The protein belongs to the archaeal Rpo11/eukaryotic RPB11/RPC19 RNA polymerase subunit family. Component of the RNA polymerase II (Pol II) core complex consisting of 12 subunits: a ten-subunit catalytic core composed of POLR2A/RPB1, POLR2B/RPB2, POLR2C/RPB3, POLR2I/RPB9, POLR2J/RPB11, POLR2E/RPABC1, POLR2F/RPABC2, POLR2H/RPABC3, POLR2K/RPABC4 and POLR2L/RPABC5 and a mobile stalk composed of two subunits POLR2D/RPB4 and POLR2G/RPB7, protruding from the core and functioning primarily in transcription initiation. Part of Pol II(G) complex, in which Pol II core associates with an additional subunit POLR2M; unlike conventional Pol II, Pol II(G) functions as a transcriptional repressor. Part of TBP-based Pol II pre-initiation complex (PIC), in which Pol II core assembles with general transcription factors and other specific initiation factors including GTF2E1, GTF2E2, GTF2F1, GTF2F2, TCEA1, ERCC2, ERCC3, GTF2H2, GTF2H3, GTF2H4, GTF2H5, GTF2A1, GTF2A2, GTF2B and TBP; this large multi-subunit PIC complex mediates DNA unwinding and targets Pol II core to the transcription start site where the first phosphodiester bond forms. Interacts with PTPN6; this interaction promotes the recruitment of RNA pol II to the PCK1 promoter.

The protein localises to the nucleus. Functionally, DNA-dependent RNA polymerase catalyzes the transcription of DNA into RNA using the four ribonucleoside triphosphates as substrates. Component of RNA polymerase II which synthesizes mRNA precursors and many functional non-coding RNAs. Pol II is the central component of the basal RNA polymerase II transcription machinery. It is composed of mobile elements that move relative to each other. POLR2J/RPB11 is part of the core element with the central large cleft. The chain is DNA-directed RNA polymerase II subunit RPB11 (POLR2J) from Bos taurus (Bovine).